The primary structure comprises 100 residues: Class II hydrophobin FOXG_02746 (100 aa).

An N-terminal signal peptide occupies residues 1-17 (MQFYTIVSLFLAGTAYA). 4 disulfides stabilise this stretch: C29–C79, C40–C70, C41–C53, and C80–C92.

This sequence belongs to the cerato-ulmin hydrophobin family. Homodimer. Homodimers further self-assemble to form highly ordered films at water-air interfaces through intermolecular interactions.

The protein localises to the secreted. Its subcellular location is the cell wall. Aerial growth, conidiation, and dispersal of filamentous fungi in the environment rely upon a capability of their secreting small amphipathic proteins called hydrophobins (HPBs) with low sequence identity. Class I can self-assemble into an outermost layer of rodlet bundles on aerial cell surfaces, conferring cellular hydrophobicity that supports fungal growth, development and dispersal; whereas Class II form highly ordered films at water-air interfaces through intermolecular interactions but contribute nothing to the rodlet structure. FOXG_02746 is a class II hydrophobin that is likely required for plant colonization. The protein is Class II hydrophobin FOXG_02746 of Fusarium oxysporum f. sp. lycopersici (strain 4287 / CBS 123668 / FGSC 9935 / NRRL 34936) (Fusarium vascular wilt of tomato).